A 325-amino-acid chain; its full sequence is Ribosomal RNA small subunit methyltransferase H (325 aa).

The interval 1 to 28 (MTASQPLDQADQDSESSSAGSSAAETEH) is disordered. The span at 15–24 (ESSSAGSSAA) shows a compositional bias: low complexity. Residues 56 to 58 (GGH), aspartate 82, tyrosine 110, aspartate 131, and glutamine 138 contribute to the S-adenosyl-L-methionine site. A disordered region spans residues 303-325 (TDEEVQANPRSRSAKLRVAKRVE). Residues 314 to 325 (RSAKLRVAKRVE) show a composition bias toward basic residues.

Belongs to the methyltransferase superfamily. RsmH family.

The protein localises to the cytoplasm. The enzyme catalyses cytidine(1402) in 16S rRNA + S-adenosyl-L-methionine = N(4)-methylcytidine(1402) in 16S rRNA + S-adenosyl-L-homocysteine + H(+). Functionally, specifically methylates the N4 position of cytidine in position 1402 (C1402) of 16S rRNA. This Rhodopirellula baltica (strain DSM 10527 / NCIMB 13988 / SH1) protein is Ribosomal RNA small subunit methyltransferase H.